We begin with the raw amino-acid sequence, 858 residues long: Cone cGMP-specific 3',5'-cyclic phosphodiesterase subunit alpha' (858 aa).

2 consecutive GAF domains span residues 75-224 (TPEQ…SIIL) and 256-433 (DVER…GWSL). 3',5'-cyclic GMP is bound by residues serine 97, aspartate 116, 169 to 172 (DKQT), and threonine 176. One can recognise a PDEase domain in the interval 486 to 819 (EEKQLVAILK…VEWKSLADEY (334 aa)). Histidine 562 acts as the Proton donor in catalysis. A divalent metal cation-binding residues include histidine 566, histidine 602, aspartate 603, and aspartate 723. Over residues 830–852 (AKKQEGGAEKAAEDSGGGDDKKS) the composition is skewed to basic and acidic residues. A disordered region spans residues 830 to 858 (AKKQEGGAEKAAEDSGGGDDKKSKTCLML). Cysteine 855 is modified (cysteine methyl ester). Residue cysteine 855 is the site of S-geranylgeranyl cysteine attachment. The propeptide at 856 to 858 (LML) is removed in mature form.

Belongs to the cyclic nucleotide phosphodiesterase family. In terms of assembly, composed of two alpha' subunits that are associated with 3 smaller proteins of 11, 13, and 15 kDa. It depends on a divalent metal cation as a cofactor.

It localises to the cell membrane. The catalysed reaction is 3',5'-cyclic GMP + H2O = GMP + H(+). As cone-specific cGMP phosphodiesterase, it plays an essential role in light detection and cone phototransduction by rapidly decreasing intracellular levels of cGMP. The sequence is that of Cone cGMP-specific 3',5'-cyclic phosphodiesterase subunit alpha' (PDE6C) from Homo sapiens (Human).